The sequence spans 348 residues: Glucose 1-dehydrogenase 2 (348 aa).

Position 39 (Cys39) interacts with Zn(2+). Position 41 (Thr41) interacts with substrate. Zn(2+)-binding residues include His64 and Glu65. 2 residues coordinate substrate: Glu110 and Glu146. Glu146 lines the Zn(2+) pocket. Residues 178–181 (AGPV), 260–262 (LGV), and 289–291 (SVN) each bind NADP(+). Residue Asn291 coordinates substrate.

Belongs to the zinc-containing alcohol dehydrogenase family. Glucose 1-dehydrogenase subfamily. Zn(2+) is required as a cofactor.

The catalysed reaction is D-glucose + NAD(+) = D-glucono-1,5-lactone + NADH + H(+). It carries out the reaction D-glucose + NADP(+) = D-glucono-1,5-lactone + NADPH + H(+). Functionally, catalyzes the NAD(P)(+)-dependent oxidation of D-glucose to D-gluconate via gluconolactone. Can utilize both NAD(+) and NADP(+) as electron acceptor. Is involved in the degradation of glucose through a non-phosphorylative variant of the Entner-Doudoroff pathway. The chain is Glucose 1-dehydrogenase 2 from Vulcanisaeta moutnovskia (strain 768-28).